Consider the following 368-residue polypeptide: Homoserine O-acetyltransferase (368 aa).

The AB hydrolase-1 domain occupies 47-349 (NAILICHALS…SGEGHDSFLL (303 aa)). Residue serine 153 is the Nucleophile of the active site. Residue arginine 221 coordinates substrate. Active-site residues include aspartate 311 and histidine 344. Position 345 (aspartate 345) interacts with substrate.

It belongs to the AB hydrolase superfamily. MetX family. Homodimer.

Its subcellular location is the cytoplasm. It catalyses the reaction L-homoserine + acetyl-CoA = O-acetyl-L-homoserine + CoA. It functions in the pathway amino-acid biosynthesis; L-methionine biosynthesis via de novo pathway; O-acetyl-L-homoserine from L-homoserine: step 1/1. Its function is as follows. Transfers an acetyl group from acetyl-CoA to L-homoserine, forming acetyl-L-homoserine. In Leptospira borgpetersenii serovar Hardjo-bovis (strain JB197), this protein is Homoserine O-acetyltransferase.